The following is an 86-amino-acid chain: Small ribosomal subunit protein bS16 (86 aa).

Belongs to the bacterial ribosomal protein bS16 family.

The polypeptide is Small ribosomal subunit protein bS16 (Borreliella afzelii (strain PKo) (Borrelia afzelii)).